A 430-amino-acid chain; its full sequence is C4-dicarboxylate transport protein (430 aa).

The next 8 helical transmembrane spans lie at 9–29 (VLYV…HFYP), 45–65 (LIKM…IAGM), 79–99 (LLYF…ATHL), 149–169 (GEIL…AHLG), 185–205 (VLFG…FGAM), 223–243 (LIGT…GAIA), 308–328 (IYMT…LTWM), and 356–376 (AATL…ILGI).

It belongs to the dicarboxylate/amino acid:cation symporter (DAACS) (TC 2.A.23) family.

It localises to the cell inner membrane. In terms of biological role, responsible for the transport of dicarboxylates such as succinate, fumarate, and malate from the periplasm across the membrane. The polypeptide is C4-dicarboxylate transport protein (Burkholderia orbicola (strain AU 1054)).